The sequence spans 411 residues: Tyrosine--tRNA ligase (411 aa).

The 'HIGH' region signature appears at 50-59; it reads PTRPDLHLGH. Residues 236-240 carry the 'KMSKS' region motif; the sequence is KMSKS. Lys239 provides a ligand contact to ATP. One can recognise an S4 RNA-binding domain in the interval 345–409; sequence VSMAKLVVLA…GKDKFARLVL (65 aa).

It belongs to the class-I aminoacyl-tRNA synthetase family. TyrS type 2 subfamily. Homodimer.

It localises to the cytoplasm. It catalyses the reaction tRNA(Tyr) + L-tyrosine + ATP = L-tyrosyl-tRNA(Tyr) + AMP + diphosphate + H(+). Functionally, catalyzes the attachment of tyrosine to tRNA(Tyr) in a two-step reaction: tyrosine is first activated by ATP to form Tyr-AMP and then transferred to the acceptor end of tRNA(Tyr). The chain is Tyrosine--tRNA ligase from Deinococcus radiodurans (strain ATCC 13939 / DSM 20539 / JCM 16871 / CCUG 27074 / LMG 4051 / NBRC 15346 / NCIMB 9279 / VKM B-1422 / R1).